A 517-amino-acid polypeptide reads, in one-letter code: Keratin-associated protein 16-1 (517 aa).

Repeat copies occupy residues 73 to 77 (CCDPV), 93 to 97 (CCEAT), 128 to 132 (CCQPV), 153 to 157 (CCEPA), 168 to 172 (CCQPV), 198 to 202 (CCQPV), 208 to 212 (CCSAV), 228 to 232 (CCQPV), 248 to 252 (CCDPS), 283 to 287 (CCVQS), and 303 to 307 (CCVSS). The tract at residues 73 to 307 (CCDPVICEPS…CQEPSCCVSS (235 aa)) is 11 X 5 AA repeats of C-C-X(3). The disordered stretch occupies residues 483-517 (VSEEAPCQPTEAKPISPTTREAAAAQPAASKPANC). Positions 504 to 517 (AAAAQPAASKPANC) are enriched in low complexity.

Belongs to the KRTAP type 16 family.

The chain is Keratin-associated protein 16-1 (KRTAP16-1) from Homo sapiens (Human).